Consider the following 83-residue polypeptide: Short neurotoxin 3FTx-Oxy3 (83 aa).

An N-terminal signal peptide occupies residues 1–21 (MKTLLLTLVVVTIVCLDLGYT). 4 cysteine pairs are disulfide-bonded: Cys-24–Cys-45, Cys-38–Cys-62, Cys-64–Cys-75, and Cys-76–Cys-81.

Belongs to the three-finger toxin family. Short-chain subfamily. Type I alpha-neurotoxin sub-subfamily. Expressed by the venom gland.

The protein resides in the secreted. Binds to muscle nicotinic acetylcholine receptor (nAChR) and inhibit acetylcholine from binding to the receptor, thereby impairing neuromuscular transmission. The chain is Short neurotoxin 3FTx-Oxy3 from Oxyuranus microlepidotus (Inland taipan).